We begin with the raw amino-acid sequence, 801 residues long: Palmitoyl thioesterase CPT1C (801 aa).

Residues 1 to 49 lie on the Cytoplasmic side of the membrane; that stretch reads MAEAHQASSLLSSLSSDGAEVELSSSVWQEIYLSALRSWKRNLWRVWND. The helical transmembrane segment at 50–70 threads the bilayer; sequence FLAGVVPATPLSWLFLFSTIQ. Topologically, residues 71 to 103 are mitochondrial intermembrane; the sequence is LACLLQLDPSLGLMEKIKELLPDWGGQHHQLQG. Residues 104 to 124 form a helical membrane-spanning segment; the sequence is LLAAAVFASCLWGTLIFTLHV. Residues 125 to 801 are Cytoplasmic-facing; sequence ALRLLLSHHG…PNIPKSSTNL (677 aa). The Proton acceptor role is filled by His469. CoA is bound at residue 551-563; that stretch reads GKSFIKGCHVSSD. Residues Tyr585, Ser587, and Thr598 each coordinate (R)-carnitine. A required for interaction with GRIA1 region spans residues 760–801; that stretch reads LFQAGQQFKRQFTGLGESSGWKYSNLSCKTVDPNIPKSSTNL.

The protein belongs to the carnitine/choline acetyltransferase family. Peripherally associated with AMPAR complex. AMPAR complex consists of an inner core made of 4 pore-forming GluA/GRIA proteins (GRIA1, GRIA2, GRIA3 and GRIA4) and 4 major auxiliary subunits arranged in a twofold symmetry. One of the two pairs of distinct binding sites is occupied either by CNIH2, CNIH3 or CACNG2, CACNG3. The other harbors CACNG2, CACNG3, CACNG4, CACNG8 or GSG1L. This inner core of AMPAR complex is complemented by outer core constituents binding directly to the GluA/GRIA proteins at sites distinct from the interaction sites of the inner core constituents. Outer core constituents include at least PRRT1, PRRT2, CKAMP44/SHISA9, FRRS1L and NRN1. The proteins of the inner and outer core serve as a platform for other, more peripherally associated AMPAR constituents, including CPT1C. Alone or in combination, these auxiliary subunits control the gating and pharmacology of the AMPAR complex and profoundly impact their biogenesis and protein processing. Interacts with SACM1L; the interaction regulates SACM1L phosphatidylinositol-3-phosphatase activity and translocation to endoplasmic reticulum/trans Golgi network in a malonyl-CoA dependent manner. Interacts with ATL1. In terms of tissue distribution, expressed in brain (at protein level).

It localises to the synapse. The protein resides in the cell projection. It is found in the dendrite. Its subcellular location is the axon. The protein localises to the endoplasmic reticulum membrane. The enzyme catalyses S-hexadecanoyl-L-cysteinyl-[protein] + H2O = L-cysteinyl-[protein] + hexadecanoate + H(+). Its function is as follows. Palmitoyl thioesterase specifically expressed in the endoplasmic reticulum of neurons. Modulates the trafficking of the glutamate receptor, AMPAR, to plasma membrane through depalmitoylation of GRIA1. Also regulates AMPR trafficking through the regulation of SACM1L phosphatidylinositol-3-phosphatase activity by interaction in a malonyl-CoA dependent manner. Binds malonyl-CoA and couples malonyl-CoA to ceramide levels, necessary for proper spine maturation and contributing to systemic energy homeostasis and appetite control. Binds to palmitoyl-CoA, but does not have carnitine palmitoyltransferase 1 catalytic activity or at very low levels. This chain is Palmitoyl thioesterase CPT1C (Cpt1c), found in Rattus norvegicus (Rat).